Reading from the N-terminus, the 356-residue chain is Histidinol-phosphate aminotransferase (356 aa).

Lys214 bears the N6-(pyridoxal phosphate)lysine mark.

This sequence belongs to the class-II pyridoxal-phosphate-dependent aminotransferase family. Histidinol-phosphate aminotransferase subfamily. In terms of assembly, homodimer. It depends on pyridoxal 5'-phosphate as a cofactor.

The enzyme catalyses L-histidinol phosphate + 2-oxoglutarate = 3-(imidazol-4-yl)-2-oxopropyl phosphate + L-glutamate. It functions in the pathway amino-acid biosynthesis; L-histidine biosynthesis; L-histidine from 5-phospho-alpha-D-ribose 1-diphosphate: step 7/9. This is Histidinol-phosphate aminotransferase from Shigella boydii serotype 18 (strain CDC 3083-94 / BS512).